Reading from the N-terminus, the 142-residue chain is HTH-type transcriptional regulator MntR (142 aa).

In terms of domain architecture, HTH dtxR-type spans 1 to 63; that stretch reads MPTPSMEDYI…YEKYRGLILT (63 aa). Mn(2+) is bound by residues aspartate 8, glutamate 11, histidine 77, glutamate 99, glutamate 102, and histidine 103.

This sequence belongs to the DtxR/MntR family. As to quaternary structure, homodimer.

It is found in the cytoplasm. With respect to regulation, DNA binding is strongly activated by Mn(2+). Its function is as follows. Central regulator of manganese homeostasis. The protein is HTH-type transcriptional regulator MntR of Listeria monocytogenes serotype 4b (strain CLIP80459).